The sequence spans 149 residues: Small ribosomal subunit protein eS19 (149 aa).

This sequence belongs to the eukaryotic ribosomal protein eS19 family.

The chain is Small ribosomal subunit protein eS19 (RPS19) from Mya arenaria (Soft-shell clam).